The primary structure comprises 437 residues: Chromosomal replication initiator protein DnaA (437 aa).

Residues 1–69 are domain I, interacts with DnaA modulators; the sequence is MLGDTTLKQL…AHLFELSTGI (69 aa). The tract at residues 69-100 is domain II; that stretch reads IRPKIEIRLGSLKKDVKSSSPKAGVSKGQKST. The interval 101–315 is domain III, AAA+ region; that stretch reads ILNPSFTFDS…GIIIKLNAYA (215 aa). ATP is bound by residues G145, G147, K148, and T149. Residues 316 to 437 form a domain IV, binds dsDNA region; it reads NLMNQEITLQ…ELKNKIKSRN (122 aa).

Belongs to the DnaA family. In terms of assembly, oligomerizes as a right-handed, spiral filament on DNA at oriC.

Its subcellular location is the cytoplasm. In terms of biological role, plays an essential role in the initiation and regulation of chromosomal replication. ATP-DnaA binds to the origin of replication (oriC) to initiate formation of the DNA replication initiation complex once per cell cycle. Binds the DnaA box (a 9 base pair repeat at the origin) and separates the double-stranded (ds)DNA. Forms a right-handed helical filament on oriC DNA; dsDNA binds to the exterior of the filament while single-stranded (ss)DNA is stabiized in the filament's interior. The ATP-DnaA-oriC complex binds and stabilizes one strand of the AT-rich DNA unwinding element (DUE), permitting loading of DNA polymerase. After initiation quickly degrades to an ADP-DnaA complex that is not apt for DNA replication. Binds acidic phospholipids. The polypeptide is Chromosomal replication initiator protein DnaA (Wolinella succinogenes (strain ATCC 29543 / DSM 1740 / CCUG 13145 / JCM 31913 / LMG 7466 / NCTC 11488 / FDC 602W) (Vibrio succinogenes)).